The chain runs to 398 residues: 2-amino-3-ketobutyrate coenzyme A ligase (398 aa).

A pyridoxal 5'-phosphate-binding site is contributed by 111 to 112 (CF). His136 is a substrate binding site. Residues Ser185, 210 to 213 (DDSH), 241 to 244 (TLGK), and 274 to 275 (SN) each bind pyridoxal 5'-phosphate. Position 244 is an N6-(pyridoxal phosphate)lysine (Lys244). Arg368 lines the substrate pocket.

Belongs to the class-II pyridoxal-phosphate-dependent aminotransferase family. As to quaternary structure, homodimer. Pyridoxal 5'-phosphate is required as a cofactor.

It carries out the reaction glycine + acetyl-CoA = (2S)-2-amino-3-oxobutanoate + CoA. The protein operates within amino-acid degradation; L-threonine degradation via oxydo-reductase pathway; glycine from L-threonine: step 2/2. Catalyzes the cleavage of 2-amino-3-ketobutyrate to glycine and acetyl-CoA. The chain is 2-amino-3-ketobutyrate coenzyme A ligase from Salmonella typhimurium (strain LT2 / SGSC1412 / ATCC 700720).